A 576-amino-acid chain; its full sequence is MNIQALLSDKVSQALIAAGAPADCEAQVRQSAKAQFGDYQANGVMAVAKKLGMQPRQLAERVVELLDLTGIASKIEIAGPGFINIFLDRQWVAEKVEYALTAPKLGVAPVEPQTIVVDYSAPNVAKQMHVGHLRSTIIGDAAVRTLAFLGHNVIRANHVGDWGTQFGMLIAYLEKMQNENASDMGLSDLELFYQQAKKTYDEDEEFALRARAYVVKLQSGDEYCRQMWRKLVDITMAQNQVAYDRLNVTLTKDDVMGESLYNAMLPEIVADLKAKGLAVESEGATVVYLDEYKNKDGEPMGVIIQKKDGGYLYTTTDIACAKYRYETLGADRILYYIDSRQHQHLMQAWAIVRKAGYVPESVPLEHHMFGMMLGKDGKPFKTRSGGTVKLSDLLDEAVERAGKLIAEKNPDMPADELKQVINAVGIGAVKYADLSKSRTTDYIFDWDNMLALDGNTAPYMQYAYTRVVSVFRRAGVDENSLTLPLVITEDREAALATRLLQFEEIITTVAREGTPHVMCSYLYDLAGLFSSFYEHCQILNAESEEIRQSRLKLAMLTAKTLKQGLDTLGIQTVERM.

The 'HIGH' region signature appears at 122–132 (PNVAKQMHVGH).

This sequence belongs to the class-I aminoacyl-tRNA synthetase family. In terms of assembly, monomer.

The protein localises to the cytoplasm. It carries out the reaction tRNA(Arg) + L-arginine + ATP = L-arginyl-tRNA(Arg) + AMP + diphosphate. This chain is Arginine--tRNA ligase, found in Yersinia pseudotuberculosis serotype O:1b (strain IP 31758).